The chain runs to 294 residues: 33 kDa chaperonin (294 aa).

2 disulfides stabilise this stretch: Cys-239-Cys-241 and Cys-272-Cys-275.

The protein belongs to the HSP33 family. Post-translationally, under oxidizing conditions two disulfide bonds are formed involving the reactive cysteines. Under reducing conditions zinc is bound to the reactive cysteines and the protein is inactive.

It is found in the cytoplasm. Redox regulated molecular chaperone. Protects both thermally unfolding and oxidatively damaged proteins from irreversible aggregation. Plays an important role in the bacterial defense system toward oxidative stress. The polypeptide is 33 kDa chaperonin (Listeria welshimeri serovar 6b (strain ATCC 35897 / DSM 20650 / CCUG 15529 / CIP 8149 / NCTC 11857 / SLCC 5334 / V8)).